The following is a 302-amino-acid chain: Probable lipid kinase YegS-like (302 aa).

The region spanning 1 to 129 (MDKDKVLLVL…IDLGEVNGKL (129 aa)) is the DAGKc domain. ATP contacts are provided by residues Thr-39, 65-71 (GDGTLRE), and Thr-92. Residues Arg-210, Asp-213, and Leu-215 each contribute to the Mg(2+) site. Catalysis depends on Glu-268, which acts as the Proton acceptor.

This sequence belongs to the diacylglycerol/lipid kinase family. YegS lipid kinase subfamily. Requires Mg(2+) as cofactor. The cofactor is Ca(2+).

It is found in the cytoplasm. In terms of biological role, probably phosphorylates lipids; the in vivo substrate is unknown. This Pseudomonas aeruginosa (strain ATCC 15692 / DSM 22644 / CIP 104116 / JCM 14847 / LMG 12228 / 1C / PRS 101 / PAO1) protein is Probable lipid kinase YegS-like.